The chain runs to 557 residues: 2-succinyl-5-enolpyruvyl-6-hydroxy-3-cyclohexene-1-carboxylate synthase (557 aa).

The protein belongs to the TPP enzyme family. MenD subfamily. As to quaternary structure, homodimer. Requires Mg(2+) as cofactor. Mn(2+) serves as cofactor. The cofactor is thiamine diphosphate.

It carries out the reaction isochorismate + 2-oxoglutarate + H(+) = 5-enolpyruvoyl-6-hydroxy-2-succinyl-cyclohex-3-ene-1-carboxylate + CO2. Its pathway is quinol/quinone metabolism; 1,4-dihydroxy-2-naphthoate biosynthesis; 1,4-dihydroxy-2-naphthoate from chorismate: step 2/7. It participates in quinol/quinone metabolism; menaquinone biosynthesis. Its function is as follows. Catalyzes the thiamine diphosphate-dependent decarboxylation of 2-oxoglutarate and the subsequent addition of the resulting succinic semialdehyde-thiamine pyrophosphate anion to isochorismate to yield 2-succinyl-5-enolpyruvyl-6-hydroxy-3-cyclohexene-1-carboxylate (SEPHCHC). The polypeptide is 2-succinyl-5-enolpyruvyl-6-hydroxy-3-cyclohexene-1-carboxylate synthase (Staphylococcus aureus (strain MRSA252)).